Here is a 254-residue protein sequence, read N- to C-terminus: NAD kinase (254 aa).

Catalysis depends on D44, which acts as the Proton acceptor. Residues 44–45 (DG), 114–115 (NE), D144, A152, 155–160 (TAYNYS), and A179 contribute to the NAD(+) site.

It belongs to the NAD kinase family. Requires a divalent metal cation as cofactor.

Its subcellular location is the cytoplasm. The catalysed reaction is NAD(+) + ATP = ADP + NADP(+) + H(+). Its function is as follows. Involved in the regulation of the intracellular balance of NAD and NADP, and is a key enzyme in the biosynthesis of NADP. Catalyzes specifically the phosphorylation on 2'-hydroxyl of the adenosine moiety of NAD to yield NADP. This Cereibacter sphaeroides (strain ATCC 17023 / DSM 158 / JCM 6121 / CCUG 31486 / LMG 2827 / NBRC 12203 / NCIMB 8253 / ATH 2.4.1.) (Rhodobacter sphaeroides) protein is NAD kinase.